A 461-amino-acid chain; its full sequence is Protein transport protein HofB homolog (461 aa).

Residue 222 to 229 (GPTGSGKT) participates in ATP binding.

The protein belongs to the GSP E family.

The protein is Protein transport protein HofB homolog (hofB) of Escherichia coli (strain K12).